We begin with the raw amino-acid sequence, 252 residues long: Phosphate import ATP-binding protein PstB (252 aa).

The ABC transporter domain occupies 6–247 (ISAENLNLFY…PKDQRTEDYI (242 aa)). 38–45 (GPSGCGKS) is a binding site for ATP.

Belongs to the ABC transporter superfamily. Phosphate importer (TC 3.A.1.7) family. The complex is composed of two ATP-binding proteins (PstB), two transmembrane proteins (PstC and PstA) and a solute-binding protein (PstS).

The protein resides in the cell membrane. The enzyme catalyses phosphate(out) + ATP + H2O = ADP + 2 phosphate(in) + H(+). Part of the ABC transporter complex PstSACB involved in phosphate import. Responsible for energy coupling to the transport system. The chain is Phosphate import ATP-binding protein PstB from Heliobacterium mobile (Heliobacillus mobilis).